The following is a 452-amino-acid chain: Matrilin-3 (452 aa).

The signal sequence occupies residues 1–24 (MRRALGTLGCCLALLLPLLPAARG). Positions 54 to 229 (DLVFIIDSSR…GVIEKLTSKF (176 aa)) constitute a VWFA domain. 4 consecutive EGF-like domains span residues 235–275 (AANT…RTCS), 276–316 (AVDV…KTCS), 317–357 (AMDV…KTCS), and 358–398 (AVDV…KTCS). 12 cysteine pairs are disulfide-bonded: Cys-239-Cys-250, Cys-246-Cys-259, Cys-261-Cys-274, Cys-280-Cys-291, Cys-287-Cys-300, Cys-302-Cys-315, Cys-321-Cys-332, Cys-328-Cys-341, Cys-343-Cys-356, Cys-362-Cys-373, Cys-369-Cys-382, and Cys-384-Cys-397. An N-linked (GlcNAc...) asparagine glycan is attached at Asn-295. The stretch at 419–451 (ALQDSVTSRLEALSTKLDEVSQKLQAYQDRQQV) forms a coiled coil.

Can form homooligomers (monomers, dimers, trimers and tetramers) and heterooligomers with matrilin-1. As to expression, expression is restricted to cartilaginous tissues.

It localises to the secreted. Its function is as follows. Major component of the extracellular matrix of cartilage and may play a role in the formation of extracellular filamentous networks. The chain is Matrilin-3 (MATN3) from Gallus gallus (Chicken).